The primary structure comprises 208 residues: Ribosomal RNA large subunit methyltransferase E (208 aa).

The S-adenosyl-L-methionine site is built by G62, W64, D82, D98, and D123. Residue K163 is the Proton acceptor of the active site.

Belongs to the class I-like SAM-binding methyltransferase superfamily. RNA methyltransferase RlmE family.

The protein resides in the cytoplasm. The catalysed reaction is uridine(2552) in 23S rRNA + S-adenosyl-L-methionine = 2'-O-methyluridine(2552) in 23S rRNA + S-adenosyl-L-homocysteine + H(+). Specifically methylates the uridine in position 2552 of 23S rRNA at the 2'-O position of the ribose in the fully assembled 50S ribosomal subunit. The chain is Ribosomal RNA large subunit methyltransferase E from Haemophilus ducreyi (strain 35000HP / ATCC 700724).